Consider the following 246-residue polypeptide: MINDINNFIESKKLSLNSRKSYHYDLKQFYKIIGGHVNSEKLALYQQSLSEFKLTARKRKLSAVNQFLFFLYNRGTLKEFYRLQETEKITLTQTKSQIMDLSNFYQDTDYPSGRLIALLILSLGLTPAEIANLKKADFDTTFNILSIEKSQMKRILKLPENLLPFLLESLEEDGDLVFEHNGKPYSRQWFFNQLTDFLNEKNEQQLTAQLLREQFILKQKENGKTMTELSRLLGLKTPITLERYYR.

A Core-binding (CB) domain is found at 1-72; the sequence is MINDINNFIE…AVNQFLFFLY (72 aa). In terms of domain architecture, Tyr recombinase spans 84–246; that stretch reads QETEKITLTQ…TPITLERYYR (163 aa). Residues lysine 149 and arginine 212 contribute to the active site. Tyrosine 244 serves as the catalytic O-(3'-phospho-DNA)-tyrosine intermediate.

It belongs to the 'phage' integrase family. XerD-like subfamily.

It is found in the cytoplasm. Its function is as follows. Putative tyrosine recombinase. Not involved in the cutting and rejoining of the recombining DNA molecules on dif(SL) site. The sequence is that of Tyrosine recombinase XerD-like from Streptococcus agalactiae serotype III (strain NEM316).